The following is a 130-amino-acid chain: Fluoride-specific ion channel FluC (130 aa).

The next 4 helical transmembrane spans lie at 2–22, 36–56, 71–91, and 100–120; these read GLLL…RFAL, GILL…AFLI, FLLV…SLDI, and IFIA…AVIL. Na(+)-binding residues include Gly-79 and Thr-82.

This sequence belongs to the fluoride channel Fluc/FEX (TC 1.A.43) family.

It is found in the cell inner membrane. The catalysed reaction is fluoride(in) = fluoride(out). Its activity is regulated as follows. Na(+) is not transported, but it plays an essential structural role and its presence is essential for fluoride channel function. Fluoride-specific ion channel. Important for reducing fluoride concentration in the cell, thus reducing its toxicity. The chain is Fluoride-specific ion channel FluC from Francisella tularensis subsp. tularensis (strain FSC 198).